Reading from the N-terminus, the 154-residue chain is Large ribosomal subunit protein uL23z (154 aa).

This sequence belongs to the universal ribosomal protein uL23 family.

In terms of biological role, binds to a specific region on the 26S rRNA. The polypeptide is Large ribosomal subunit protein uL23z (RPL23AA) (Arabidopsis thaliana (Mouse-ear cress)).